We begin with the raw amino-acid sequence, 163 residues long: Nucleotide-binding protein LA_3406 (163 aa).

It belongs to the YajQ family.

Nucleotide-binding protein. The sequence is that of Nucleotide-binding protein LA_3406 from Leptospira interrogans serogroup Icterohaemorrhagiae serovar Lai (strain 56601).